The sequence spans 258 residues: Tryptophan synthase alpha chain (258 aa).

Residues Glu-47 and Asp-58 each act as proton acceptor in the active site.

This sequence belongs to the TrpA family. In terms of assembly, tetramer of two alpha and two beta chains.

The enzyme catalyses (1S,2R)-1-C-(indol-3-yl)glycerol 3-phosphate + L-serine = D-glyceraldehyde 3-phosphate + L-tryptophan + H2O. It functions in the pathway amino-acid biosynthesis; L-tryptophan biosynthesis; L-tryptophan from chorismate: step 5/5. In terms of biological role, the alpha subunit is responsible for the aldol cleavage of indoleglycerol phosphate to indole and glyceraldehyde 3-phosphate. The sequence is that of Tryptophan synthase alpha chain from Bacillus cereus (strain G9842).